The sequence spans 677 residues: mRNA export factor Gle1 (677 aa).

Over residues 34–48 the composition is skewed to basic and acidic residues; sequence EDREPIWVEGSRKTP. 3 disordered regions span residues 34–65, 113–136, and 294–366; these read EDRE…NNEI, KQDA…DQLQ, and ERQR…ATST. Pro residues predominate over residues 49–60; that stretch reads EPPLPEESPAPE. 2 coiled-coil regions span residues 122-179 and 280-346; these read ETQQ…QKLH and QQQL…AANV. The span at 294–340 shows a compositional bias: basic and acidic residues; the sequence is ERQRQQQQEEERQKLEEQQKLEEQEKLRKEKEESAAKEKQQEAETAK.

This sequence belongs to the GLE1 family. May associate with the NPC.

The protein localises to the cytoplasm. It is found in the nucleus. It localises to the nuclear pore complex. Required for the export of mRNAs containing poly(A) tails from the nucleus into the cytoplasm. May be involved in the terminal step of the mRNA transport through the nuclear pore complex (NPC). The sequence is that of mRNA export factor Gle1 from Drosophila melanogaster (Fruit fly).